Here is a 297-residue protein sequence, read N- to C-terminus: Manganese efflux system protein MneP (297 aa).

The next 6 membrane-spanning stretches (helical) occupy residues 12-32, 43-63, 85-105, 111-131, 155-175, and 177-197; these read VALIALIANLILMAGKVFFGL, GIHSAADVVASIAVLAVIGIS, IVGIILVIVSVYILIEAILSF, VPQYSALFAALISYVAKEILY, GDIVASLAAFIGVLLAIIGNS, and GWSYLLYADAIASAIVAYLIF.

Belongs to the cation diffusion facilitator (CDF) transporter (TC 2.A.4) family.

It localises to the cell membrane. Functionally, primary efflux pump for manganese. May prevent manganese intoxication. This chain is Manganese efflux system protein MneP, found in Bacillus subtilis (strain 168).